Reading from the N-terminus, the 876-residue chain is Alanine--tRNA ligase (876 aa).

Histidine 562, histidine 566, cysteine 666, and histidine 670 together coordinate Zn(2+).

It belongs to the class-II aminoacyl-tRNA synthetase family. The cofactor is Zn(2+).

Its subcellular location is the cytoplasm. The catalysed reaction is tRNA(Ala) + L-alanine + ATP = L-alanyl-tRNA(Ala) + AMP + diphosphate. Catalyzes the attachment of alanine to tRNA(Ala) in a two-step reaction: alanine is first activated by ATP to form Ala-AMP and then transferred to the acceptor end of tRNA(Ala). Also edits incorrectly charged Ser-tRNA(Ala) and Gly-tRNA(Ala) via its editing domain. This Marinobacter nauticus (strain ATCC 700491 / DSM 11845 / VT8) (Marinobacter aquaeolei) protein is Alanine--tRNA ligase.